A 1946-amino-acid chain; its full sequence is Sickle tail protein (1946 aa).

Disordered stretches follow at residues 1–83 (MEES…GMQP) and 113–176 (ERLR…VRSA). Residues 18–36 (DSRQMPQQGRSNLHVTSQE) show a composition bias toward polar residues. Basic and acidic residues predominate over residues 38–47 (AACRRPRERL). A Phosphoserine modification is found at S169. Y244 bears the Phosphotyrosine mark. Disordered regions lie at residues 305–324 (HPPHVIPNSPPSTPVPHSLP) and 339–374 (AIPGNATIPRDRLSSLPVSRSISPSPSAILERRDVK). The span at 308–324 (HVIPNSPPSTPVPHSLP) shows a compositional bias: pro residues. The segment covering 352–367 (SSLPVSRSISPSPSAI) has biased composition (low complexity). The O-linked (GlcNAc) serine glycan is linked to S357. 2 positions are modified to phosphoserine: S361 and S365. Y393 is subject to Phosphotyrosine. Positions 455–512 (SRKYPDSHLPTLGSKTPPASPHRVGDLRMIDLHPHLNTHGPPHTLQPDRASPSRQSFK) are disordered. Residue T470 is modified to Phosphothreonine. S474 carries the post-translational modification Phosphoserine. The segment covering 477–488 (RVGDLRMIDLHP) has biased composition (basic and acidic residues). 2 coiled-coil regions span residues 557-581 (RETRERMQAMEKQIASLTGLVQSAL) and 644-685 (TSLL…ELEI). Residue S809 is modified to Phosphoserine. Disordered stretches follow at residues 853-875 (EETAHAPGQPLHCSTGSPGDVKS) and 891-947 (SPVV…PVNG). Polar residues-rich tracts occupy residues 891 to 909 (SPVVMQPSQHSSALMNPAQ) and 927 to 947 (QEVTSAQSAPGPQSPQTPVNG). A coiled-coil region spans residues 962-990 (SAKNRAVSIEKAEKKWEEKRQNLEHYNGK). The interval 1008–1221 (PNLEMPPASS…LRPSGPPKWE (214 aa)) is disordered. Phosphoserine is present on residues S1032, S1035, S1038, and S1049. Residues 1049–1058 (SPPPPPPPPR) show a composition bias toward pro residues. Polar residues predominate over residues 1151-1162 (NPNSHAEQSRAN). Positions 1176-1194 (PKEKKNLEFYHEDVRKSDV) are enriched in basic and acidic residues. S1466 is modified (phosphoserine). Residues 1469 to 1495 (FEECDEELERMLTEEKIEEEEEDENED) adopt a coiled-coil conformation. Disordered regions lie at residues 1482-1567 (EEKI…VDDQ), 1622-1664 (AKRF…RKST), and 1691-1946 (VDTS…KETS). Residues 1484-1495 (KIEEEEEDENED) show a composition bias toward acidic residues. Residues 1498–1508 (VRTSSQMSCEQ) are compositionally biased toward polar residues. 2 stretches are compositionally biased toward basic and acidic residues: residues 1509-1518 (VDSRSDRMGQ) and 1622-1644 (AKRFEITRSQPEDALKTMARRQE). Positions 1659–1688 (EIRKSTYRTLDSLEQTIKQLENTISEMSPR) form a coiled coil. The segment covering 1739–1759 (KGSSTTPQTSRMPVPMTSKNR) has biased composition (polar residues). At S1741 the chain carries Phosphoserine. A compositionally biased stretch (basic and acidic residues) spans 1765–1777 (KASKQSKLQDPRQ). Residues 1806–1825 (ALSPSSGKSSSLPSASGDSS) are compositionally biased toward low complexity. S1843 carries the phosphoserine modification. A compositionally biased stretch (polar residues) spans 1851 to 1866 (HSASLIPSVSNGSLKF). A compositionally biased stretch (low complexity) spans 1890 to 1899 (AAPTTSSSSS). 3 positions are modified to phosphoserine: S1899, S1902, and S1905. Over residues 1920–1946 (HTPSLASYKAQNGSSSKATPSTAKETS) the composition is skewed to polar residues.

In terms of assembly, interacts with CPNE4 (via VWFA domain). As to expression, expressed predominantly in the notochord and mesonephros during embryogenesis as well as in other areas such as the epithalamus sulcus, lens vesicle, inner retinal layer, heart, hepatic primordial surface, infundibulum, surface ectoderm, hind gut and limb bud mesenchyme. In adults, expressed in a range of tissues including the nucleus pulposus, corpus callosum, kidney, cardiac muscle, Sertoli cells and hair follicles.

The protein resides in the cytoplasm. It is found in the cytoskeleton. It localises to the microtubule organizing center. Its subcellular location is the centrosome. In terms of biological role, required for normal development of intervertebral disks. In Mus musculus (Mouse), this protein is Sickle tail protein.